We begin with the raw amino-acid sequence, 485 residues long: Probable phosphomannomutase (485 aa).

Ser-86 functions as the Phosphoserine intermediate in the catalytic mechanism. 4 residues coordinate Mg(2+): Ser-86, Asp-236, Asp-238, and Asp-240.

Belongs to the phosphohexose mutase family. Mg(2+) serves as cofactor.

It catalyses the reaction alpha-D-mannose 1-phosphate = D-mannose 6-phosphate. This Haemophilus influenzae (strain ATCC 51907 / DSM 11121 / KW20 / Rd) protein is Probable phosphomannomutase.